We begin with the raw amino-acid sequence, 253 residues long: Pimeloyl-[acyl-carrier protein] methyl ester esterase (253 aa).

Substrate is bound by residues Trp18, 78-79 (SL), and 139-143 (FLALD). Ser78 (nucleophile) is an active-site residue. Active-site residues include Asp203 and His231. His231 serves as a coordination point for substrate.

Belongs to the AB hydrolase superfamily. Carboxylesterase BioH family. Monomer.

The protein localises to the cytoplasm. It catalyses the reaction 6-carboxyhexanoyl-[ACP] methyl ester + H2O = 6-carboxyhexanoyl-[ACP] + methanol + H(+). It participates in cofactor biosynthesis; biotin biosynthesis. Its function is as follows. The physiological role of BioH is to remove the methyl group introduced by BioC when the pimeloyl moiety is complete. It allows to synthesize pimeloyl-ACP via the fatty acid synthetic pathway through the hydrolysis of the ester bonds of pimeloyl-ACP esters. The chain is Pimeloyl-[acyl-carrier protein] methyl ester esterase from Xanthomonas campestris pv. campestris (strain 8004).